We begin with the raw amino-acid sequence, 345 residues long: MTIAGRNKVVAFSIVLSALLCSISLLQAAFVLSGGSLPQLAVARVPPLLHTTGRAFMHVLTFLLPEAAARSLAAVSTAPSNSSTLVAILGTGLSAPLLLTYLLRRFEKTHAVEISYFSLFLCALNFEGVRLFLPILYTGTLTTYAGNVPMQIVMFFRSLALLALFASGIFAKKTLTRQEGAVVFVLCTVAFLISRYTTIHTIHAYRPSQSTQGAILLAQPISESGSIIDSTGEEKTLKVRSSAHRKTRILVTPQRNFTFYYGSHAWHRWFFWTTAVLSALSYGVLGHTLQISHYYIAAAALPFVIAGYRLLTHGLTWSACIVGLFLLNTASVFFIRSVHRVHIWQ.

8 helical membrane-spanning segments follow: residues V9 to V31, T84 to L103, Y116 to T138, V148 to F170, V182 to A204, W269 to G286, I291 to Y308, and H313 to I335.

The protein resides in the cell membrane. This is an uncharacterized protein from Treponema pallidum (strain Nichols).